Reading from the N-terminus, the 409-residue chain is Putative protein disulfide-isomerase DDB_G0275025 (409 aa).

Positions 1–21 (MKLINICIFIFAIICIESTFG) are cleaved as a signal peptide. The 113-residue stretch at 28 to 140 (NVINLTKKNF…AKFSLAKLPS (113 aa)) folds into the Thioredoxin domain. An intrachain disulfide couples C57 to C60. The disordered stretch occupies residues 245-273 (SNNDNNNNNNNNNNEESTKTTTTEKDPAS). Residues 247-259 (NDNNNNNNNNNNE) are compositionally biased toward low complexity. Over residues 260–273 (ESTKTTTTEKDPAS) the composition is skewed to basic and acidic residues. A Prevents secretion from ER motif is present at residues 406 to 409 (KDEL).

Belongs to the protein disulfide isomerase family.

The protein resides in the endoplasmic reticulum lumen. The catalysed reaction is Catalyzes the rearrangement of -S-S- bonds in proteins.. The sequence is that of Putative protein disulfide-isomerase DDB_G0275025 from Dictyostelium discoideum (Social amoeba).